A 208-amino-acid polypeptide reads, in one-letter code: ATP-dependent Clp protease proteolytic subunit (208 aa).

Catalysis depends on serine 98, which acts as the Nucleophile. Residue histidine 123 is part of the active site.

This sequence belongs to the peptidase S14 family. In terms of assembly, fourteen ClpP subunits assemble into 2 heptameric rings which stack back to back to give a disk-like structure with a central cavity, resembling the structure of eukaryotic proteasomes.

It is found in the cytoplasm. It carries out the reaction Hydrolysis of proteins to small peptides in the presence of ATP and magnesium. alpha-casein is the usual test substrate. In the absence of ATP, only oligopeptides shorter than five residues are hydrolyzed (such as succinyl-Leu-Tyr-|-NHMec, and Leu-Tyr-Leu-|-Tyr-Trp, in which cleavage of the -Tyr-|-Leu- and -Tyr-|-Trp bonds also occurs).. Functionally, cleaves peptides in various proteins in a process that requires ATP hydrolysis. Has a chymotrypsin-like activity. Plays a major role in the degradation of misfolded proteins. The chain is ATP-dependent Clp protease proteolytic subunit from Wolbachia sp. subsp. Brugia malayi (strain TRS).